A 1953-amino-acid polypeptide reads, in one-letter code: MTTRLDRLVVLLDSGSTSVVRETAAKQIGDIQKVHPDELYNLLGRVVPYLKSKNWDTRVAAAKAIGGIVENVPVWNPNRTSPVKKEETEDLPSFNGDTEEKPFIKTEEGAPASSQSQVVVSSNLTSNSEVSKLEEERLSTRSHSQEIKPIVDFGPDEETAKELNTELKGKFENSLLSFESFDIANVLKAGKKLLGSASRDYDVNPANYSTHYLQQLSNLKSRLDLAGEYLDDSIMNDLGDNVGSNSKGSPTTSIPEHKTSINNNKPEDTPTPSENVHLSARQRNALKRKARQMKNSQKVRVIDVAPTLVHQQNSTSSADKKTGADYNFTAQSRSDRLVVEHKAPIVPSAAVAVTSDSVWPFETLVELLLIDMFDPSWEIRHGACMGLREIIRYAGFGYGRVVGKSEAENEQLNKKYFDDLLCRIACVFALDRFGDYLADQVVAPIRESVSQVLGVALIYVPNDSVFSMYKVLHSLVFQNELGLTNTVWEAAHGGMLGIKYLVAVKYPLFFSHSDYLDSLINTVIHGLANHDDDVRAVSALTLLPIADKLVQEKLSSCKNLLKVLWDCLDDVKDDLSSSTSCVMDLLSSLCSFTEVMNLMQETANSDPEFSFETLVPRLFHLMRYTLTGVRRSVVYALTKFISVQTSCSWITGLTLRLCFQNVLLEQQEDISKSSCELAQRVMDILYRDGPESFSKLLYSHIEPMLKVSITPIGSFRRPYPLDTTLIVKPSGQPYAPSTSRERNNNISELSNSRTKHRAKDDPKGSFCFSVDEPMLNGDVEFVGEERMLKARLRASSLLGRIIGRWKRDEILLFFKPFLQACLTSSFSTPVVLGSRLIESFFEVEDNDLTIQKDELYHLLCDQFATVPRENYANLVSQLHVVRAQCNALLNTFLDVGRLSRSKIPSLAVVVKGDPEAGPIAFGIADAEKLVGPTYENLCKLLSPSQKAQSSKALNEIKYLIIDEISIYKIAKERQDIQCSASIASAMVTYDKLPKKLNSIIKGIMESIKKEQFSCLQMHSASAMMKLISACYKESRQVISEKIVRNLCAYVCMDTTETPIFHDSGKNGILSLHSIGTSDDNDEQVSGKLVDDSDDVSNDRKSSLSSVSDKDAAVLQRMGAQLTLQQMAQNFGSSLFSRVPVLSQCLFVPLQQYAESGFPSEVDQASCTVGQDLLDAMSILRFLVAYLDSGLQSEIVSTLPHLLATLQSNYSAVRNMASKCFAAITESNAAGSKALHLLVEDVVPLLGDASSTIHRQGAIECIYHVVQRLGVRILPYILYLIIPLLGRMSDADQDVRVLATTSFATLVKLVPLEAGLPDPPDLPQYLLDSREKERKFLEQMLNPSKVEAFSIPVPISADLRKYQQEGVNWLAFLNKYELHGILCDDMGLGKTLQTICIVASDHYNRQKLFEESGSPKFAHVPSLIVCPSTLAGHWQQELSTYAPFLKVSAYVGPPAERAKIRSKMKKSDVVVTSYDICRNDVDELVKIDWNYCVLDEGHVIKNARAKLTKAVKSLRSYHRLILSGTPIQNNVLELWSLFDFLMPGFLGTEKTFQERFVRPIAASRDAKSSSKERERGTLALEAIHKQVLPFMLRRLKEDVLADLPPKIIQDYYCDMSDLQRKLLNDFVSQLNINEELEDDETEKTQGTRKKKSQKAHIFQALQYMRKLCNHPALILTEKHPKRNAIVKQLAKENSGLHDLKHAPKLTALGQLLRDCGLGNSSVNSNGIDSALTNAVSEHRVLIFCQLKDMLDMVEKDLLQATMPDVTYMRLDGSVEPTKRQEAVTKFNNDPSIDVLLLTTHVGGLGLNLTGADTVIFVEHDWNPMRDLQAMDRAHRIGQKKVVNVYRLITRGCLEEKIMGLQRFKMNVASTVVNQQNAGLSSIGTDQILDLFNTTADEQQTVQNIDKEESEDAAGRGLSGTSKKALEGLPEMWDESQYDEFNLDGFISTLPKDAS.

The stretch at 36 to 74 (PDELYNLLGRVVPYLKSKNWDTRVAAAKAIGGIVENVPV) is one HEAT 1 repeat. Residues 79 to 141 (RTSPVKKEET…KLEEERLSTR (63 aa)) form a disordered region. Over residues 98-108 (TEEKPFIKTEE) the composition is skewed to basic and acidic residues. A compositionally biased stretch (low complexity) spans 113–130 (SSQSQVVVSSNLTSNSEV). The segment covering 131–141 (SKLEEERLSTR) has biased composition (basic and acidic residues). Ser-144 is subject to Phosphoserine. The segment at 240–278 (DNVGSNSKGSPTTSIPEHKTSINNNKPEDTPTPSENVHL) is disordered. The span at 242–276 (VGSNSKGSPTTSIPEHKTSINNNKPEDTPTPSENV) shows a compositional bias: polar residues. HEAT repeat units follow at residues 358 to 396 (VWPF…YAGF), 513 to 551 (SDYL…KLVQ), 554 to 592 (LSSC…LCSF), and 608 to 646 (EFSF…VQTS). Disordered stretches follow at residues 730-762 (SGQP…KDDP) and 1078-1103 (DDND…KSSL). 2 HEAT repeats span residues 1191–1229 (QSEI…SNAA) and 1270–1311 (VRIL…LVPL). The Helicase ATP-binding domain occupies 1370 to 1543 (AFLNKYELHG…WSLFDFLMPG (174 aa)). 1383-1390 (DDMGLGKT) provides a ligand contact to ATP. The DEGH box motif lies at 1494 to 1497 (DEGH). An HEAT 8 repeat occupies 1580–1623 (EAIHKQVLPFMLRRLKEDVLADLPPKIIQDYYCDMSDLQRKLLN). In terms of domain architecture, Helicase C-terminal spans 1725–1877 (GIDSALTNAV…STVVNQQNAG (153 aa)). The disordered stretch occupies residues 1901-1920 (QNIDKEESEDAAGRGLSGTS).

Belongs to the SNF2/RAD54 helicase family. As to quaternary structure, forms a complex with TBP which binds TATA DNA.

The protein localises to the nucleus. Its function is as follows. Regulates transcription in association with TATA binding protein (TBP). Removes TBP from the TATA box via its ATPase activity. This chain is TATA-binding protein-associated factor mot1, found in Schizosaccharomyces pombe (strain 972 / ATCC 24843) (Fission yeast).